Reading from the N-terminus, the 208-residue chain is Uracil phosphoribosyltransferase (208 aa).

5-phospho-alpha-D-ribose 1-diphosphate-binding positions include R78, R103, and 130–138 (DPMLATGHS). Uracil contacts are provided by residues I193 and 198–200 (GDA). D199 is a binding site for 5-phospho-alpha-D-ribose 1-diphosphate.

It belongs to the UPRTase family. It depends on Mg(2+) as a cofactor.

It carries out the reaction UMP + diphosphate = 5-phospho-alpha-D-ribose 1-diphosphate + uracil. Its pathway is pyrimidine metabolism; UMP biosynthesis via salvage pathway; UMP from uracil: step 1/1. With respect to regulation, allosterically activated by GTP. Its function is as follows. Catalyzes the conversion of uracil and 5-phospho-alpha-D-ribose 1-diphosphate (PRPP) to UMP and diphosphate. This Brucella anthropi (strain ATCC 49188 / DSM 6882 / CCUG 24695 / JCM 21032 / LMG 3331 / NBRC 15819 / NCTC 12168 / Alc 37) (Ochrobactrum anthropi) protein is Uracil phosphoribosyltransferase.